Reading from the N-terminus, the 140-residue chain is MSSEEKLAAKVSTKASDVASDIGSFIRSQRETAHVSMRQLAERSGVSNPYLSQVERGLRKPSADVLSQIAKALRVSAEVLYVRAGILEPSETSQVRDAIITDTAITERQKQILLDIYASFTHQNEATREECPSDPTPTDD.

The 55-residue stretch at 26–80 (IRSQRETAHVSMRQLAERSGVSNPYLSQVERGLRKPSADVLSQIAKALRVSAEVL) folds into the HTH cro/C1-type domain. A DNA-binding region (H-T-H motif) is located at residues 37–56 (MRQLAERSGVSNPYLSQVER).

This is an uncharacterized protein from Mycobacterium tuberculosis (strain ATCC 25618 / H37Rv).